A 3971-amino-acid chain; its full sequence is Mycosubtilin synthase subunit A (3971 aa).

The segment at 160–479 is acyl-CoA ligase; it reads EPEADELAFI…ELEDIDLGRV (320 aa). The region spanning 578–653 is the Carrier 1 domain; it reads TPIHEIETAL…DLAAFLVENH (76 aa). S613 is subject to O-(pantetheine 4'-phosphoryl)serine. One can recognise a Ketosynthase family 3 (KS3) domain in the interval 669 to 1092; it reads SKDIAIIGMS…GTNAHVVLEE (424 aa). Active-site for beta-ketoacyl synthase activity residues include C843, H974, and H1014. In terms of domain architecture, Carrier 2 spans 1290-1365; that stretch reads THIESFLKTV…SVVDYLAENV (76 aa). At S1324 the chain carries O-(pantetheine 4'-phosphoryl)serine. The disordered stretch occupies residues 1434–1456; sequence ESEISQDKTSLSPKSVTAKKNSA. The segment covering 1440-1456 has biased composition (polar residues); it reads DKTSLSPKSVTAKKNSA. Positions 1529–1856 are GSA-AT; the sequence is IIAERSDGSR…SYFEQSQVPI (328 aa). N6-(pyridoxal phosphate)lysine is present on K1759. The disordered stretch occupies residues 1921–1942; sequence GGFIPEGPDSPNDGGHKEPETY. The condensation 1 stretch occupies residues 1938 to 2240; sequence EPETYELSPE…NMVPVKNTAS (303 aa). The 76-residue stretch at 2405-2480 folds into the Carrier 3 domain; that stretch reads EPENETELQI…ELANFIRGEK (76 aa). S2440 bears the O-(pantetheine 4'-phosphoryl)serine mark. Residues 2492–2781 are condensation 2; it reads QKAFYRTSPA…QTMGIRTKPQ (290 aa). Residues 2937-3823 form a domain 1 (asparagine-activating) region; that stretch reads PHNDTVCQWF…RNHPAGRKIF (887 aa). The interval 2967-3364 is adenylation 1; that stretch reads TYGQLNERVN…KVEAVQKAVV (398 aa). In terms of domain architecture, Carrier 4 spans 3442–3517; sequence PPGNEVESKL…QLANMALRME (76 aa). O-(pantetheine 4'-phosphoryl)serine is present on S3477. Positions 3529–3818 are condensation 3; that stretch reads KISYYPVSSA…NTLVIRNHPA (290 aa).

The protein belongs to the ATP-dependent AMP-binding enzyme family. Pyridoxal 5'-phosphate serves as cofactor. The cofactor is pantetheine 4'-phosphate.

In terms of biological role, this protein is a multifunctional enzyme, able to activate a long chain fatty acid and link it with the amino acid Asn as part of the synthesis of mycosubtilin. The activation sites consist of individual domains. In Bacillus subtilis, this protein is Mycosubtilin synthase subunit A (mycA).